The following is a 314-amino-acid chain: Lipoyl synthase (314 aa).

7 residues coordinate [4Fe-4S] cluster: Cys-55, Cys-60, Cys-66, Cys-81, Cys-85, Cys-88, and Ser-292. Residues 67 to 281 (WEDREATFLI…TQYAEGLGFS (215 aa)) form the Radical SAM core domain.

It belongs to the radical SAM superfamily. Lipoyl synthase family. Requires [4Fe-4S] cluster as cofactor.

It localises to the cytoplasm. The catalysed reaction is [[Fe-S] cluster scaffold protein carrying a second [4Fe-4S](2+) cluster] + N(6)-octanoyl-L-lysyl-[protein] + 2 oxidized [2Fe-2S]-[ferredoxin] + 2 S-adenosyl-L-methionine + 4 H(+) = [[Fe-S] cluster scaffold protein] + N(6)-[(R)-dihydrolipoyl]-L-lysyl-[protein] + 4 Fe(3+) + 2 hydrogen sulfide + 2 5'-deoxyadenosine + 2 L-methionine + 2 reduced [2Fe-2S]-[ferredoxin]. Its pathway is protein modification; protein lipoylation via endogenous pathway; protein N(6)-(lipoyl)lysine from octanoyl-[acyl-carrier-protein]: step 2/2. Catalyzes the radical-mediated insertion of two sulfur atoms into the C-6 and C-8 positions of the octanoyl moiety bound to the lipoyl domains of lipoate-dependent enzymes, thereby converting the octanoylated domains into lipoylated derivatives. The polypeptide is Lipoyl synthase (Mycobacterium leprae (strain Br4923)).